The following is a 155-amino-acid chain: Large ribosomal subunit protein uL13 (155 aa).

This sequence belongs to the universal ribosomal protein uL13 family. Part of the 50S ribosomal subunit.

This protein is one of the early assembly proteins of the 50S ribosomal subunit, although it is not seen to bind rRNA by itself. It is important during the early stages of 50S assembly. The protein is Large ribosomal subunit protein uL13 of Rickettsia rickettsii (strain Iowa).